The primary structure comprises 483 residues: tRNA sulfurtransferase (483 aa).

A THUMP domain is found at 61 to 165; the sequence is EAVCDALTRI…DDKLILVNAR (105 aa). Residues 183 to 184, lysine 265, glycine 287, and glutamine 296 each bind ATP; that span reads LI. Cysteine 344 and cysteine 456 are oxidised to a cystine. The Rhodanese domain occupies 404-483; the sequence is FATNDVVLDI…FNNVKVYRKK (80 aa). Catalysis depends on cysteine 456, which acts as the Cysteine persulfide intermediate.

This sequence belongs to the ThiI family.

The protein localises to the cytoplasm. It carries out the reaction [ThiI sulfur-carrier protein]-S-sulfanyl-L-cysteine + a uridine in tRNA + 2 reduced [2Fe-2S]-[ferredoxin] + ATP + H(+) = [ThiI sulfur-carrier protein]-L-cysteine + a 4-thiouridine in tRNA + 2 oxidized [2Fe-2S]-[ferredoxin] + AMP + diphosphate. It catalyses the reaction [ThiS sulfur-carrier protein]-C-terminal Gly-Gly-AMP + S-sulfanyl-L-cysteinyl-[cysteine desulfurase] + AH2 = [ThiS sulfur-carrier protein]-C-terminal-Gly-aminoethanethioate + L-cysteinyl-[cysteine desulfurase] + A + AMP + 2 H(+). Its pathway is cofactor biosynthesis; thiamine diphosphate biosynthesis. Its function is as follows. Catalyzes the ATP-dependent transfer of a sulfur to tRNA to produce 4-thiouridine in position 8 of tRNAs, which functions as a near-UV photosensor. Also catalyzes the transfer of sulfur to the sulfur carrier protein ThiS, forming ThiS-thiocarboxylate. This is a step in the synthesis of thiazole, in the thiamine biosynthesis pathway. The sulfur is donated as persulfide by IscS. The sequence is that of tRNA sulfurtransferase from Proteus mirabilis (strain HI4320).